The following is a 230-amino-acid chain: 7-cyano-7-deazaguanine synthase (230 aa).

8–18 (LSGGMDSAVVT) is a binding site for ATP. Zn(2+) is bound by residues cysteine 186, cysteine 196, cysteine 199, and cysteine 202.

The protein belongs to the QueC family. Zn(2+) is required as a cofactor.

The enzyme catalyses 7-carboxy-7-deazaguanine + NH4(+) + ATP = 7-cyano-7-deazaguanine + ADP + phosphate + H2O + H(+). Its pathway is purine metabolism; 7-cyano-7-deazaguanine biosynthesis. Its function is as follows. Catalyzes the ATP-dependent conversion of 7-carboxy-7-deazaguanine (CDG) to 7-cyano-7-deazaguanine (preQ(0)). In Xylella fastidiosa (strain M23), this protein is 7-cyano-7-deazaguanine synthase.